We begin with the raw amino-acid sequence, 244 residues long: 1-(5-phosphoribosyl)-5-[(5-phosphoribosylamino)methylideneamino] imidazole-4-carboxamide isomerase (244 aa).

Asp-8 serves as the catalytic Proton acceptor. Asp-131 acts as the Proton donor in catalysis.

Belongs to the HisA/HisF family.

The protein resides in the cytoplasm. The catalysed reaction is 1-(5-phospho-beta-D-ribosyl)-5-[(5-phospho-beta-D-ribosylamino)methylideneamino]imidazole-4-carboxamide = 5-[(5-phospho-1-deoxy-D-ribulos-1-ylimino)methylamino]-1-(5-phospho-beta-D-ribosyl)imidazole-4-carboxamide. It participates in amino-acid biosynthesis; L-histidine biosynthesis; L-histidine from 5-phospho-alpha-D-ribose 1-diphosphate: step 4/9. The sequence is that of 1-(5-phosphoribosyl)-5-[(5-phosphoribosylamino)methylideneamino] imidazole-4-carboxamide isomerase from Thermomicrobium roseum (strain ATCC 27502 / DSM 5159 / P-2).